The sequence spans 260 residues: Thiazole synthase (260 aa).

The active-site Schiff-base intermediate with DXP is K96. Residues G157, 184 to 185 (AG), and 206 to 207 (NT) each bind 1-deoxy-D-xylulose 5-phosphate.

The protein belongs to the ThiG family. Homotetramer. Forms heterodimers with either ThiH or ThiS.

The protein resides in the cytoplasm. The catalysed reaction is [ThiS sulfur-carrier protein]-C-terminal-Gly-aminoethanethioate + 2-iminoacetate + 1-deoxy-D-xylulose 5-phosphate = [ThiS sulfur-carrier protein]-C-terminal Gly-Gly + 2-[(2R,5Z)-2-carboxy-4-methylthiazol-5(2H)-ylidene]ethyl phosphate + 2 H2O + H(+). It functions in the pathway cofactor biosynthesis; thiamine diphosphate biosynthesis. Functionally, catalyzes the rearrangement of 1-deoxy-D-xylulose 5-phosphate (DXP) to produce the thiazole phosphate moiety of thiamine. Sulfur is provided by the thiocarboxylate moiety of the carrier protein ThiS. In vitro, sulfur can be provided by H(2)S. In Nitrobacter hamburgensis (strain DSM 10229 / NCIMB 13809 / X14), this protein is Thiazole synthase.